A 482-amino-acid polypeptide reads, in one-letter code: Protein DETOXIFICATION 13 (482 aa).

12 helical membrane passes run 39–59 (LICF…LQII), 77–97 (LASS…SCAL), 124–144 (LALV…LLVF), 159–179 (AACL…TRYF), 188–208 (LLIT…LLVY), 218–238 (ALAL…LMCF), 268–288 (AAMI…SGLL), 297–317 (VLSV…AIAA), 337–357 (IVVY…STSL), 381–401 (MAPL…LSGI), 416–436 (LGAF…WIHL), and 439–459 (VGLW…LTLV).

The protein belongs to the multi antimicrobial extrusion (MATE) (TC 2.A.66.1) family.

It localises to the membrane. This is Protein DETOXIFICATION 13 from Arabidopsis thaliana (Mouse-ear cress).